Reading from the N-terminus, the 320-residue chain is Pyrroline-5-carboxylate reductase (320 aa).

It belongs to the pyrroline-5-carboxylate reductase family.

The enzyme catalyses L-proline + NADP(+) = (S)-1-pyrroline-5-carboxylate + NADPH + 2 H(+). It carries out the reaction L-proline + NAD(+) = (S)-1-pyrroline-5-carboxylate + NADH + 2 H(+). It functions in the pathway amino-acid biosynthesis; L-proline biosynthesis; L-proline from L-glutamate 5-semialdehyde: step 1/1. The sequence is that of Pyrroline-5-carboxylate reductase (P5CR) from Lophium arboricola (Zalerion arboricola).